The sequence spans 40 residues: Photosystem II reaction center protein J (40 aa).

Residues 8–28 (IPLWLIGTVAGILVLGLLGIF) traverse the membrane as a helical segment.

Belongs to the PsbJ family. In terms of assembly, PSII is composed of 1 copy each of membrane proteins PsbA, PsbB, PsbC, PsbD, PsbE, PsbF, PsbH, PsbI, PsbJ, PsbK, PsbL, PsbM, PsbT, PsbX, PsbY, PsbZ, Psb30/Ycf12, at least 3 peripheral proteins of the oxygen-evolving complex and a large number of cofactors. It forms dimeric complexes.

It localises to the plastid. The protein resides in the chloroplast thylakoid membrane. One of the components of the core complex of photosystem II (PSII). PSII is a light-driven water:plastoquinone oxidoreductase that uses light energy to abstract electrons from H(2)O, generating O(2) and a proton gradient subsequently used for ATP formation. It consists of a core antenna complex that captures photons, and an electron transfer chain that converts photonic excitation into a charge separation. This chain is Photosystem II reaction center protein J, found in Physcomitrium patens (Spreading-leaved earth moss).